Reading from the N-terminus, the 164-residue chain is UPF0304 protein YfbU (164 aa).

The protein belongs to the UPF0304 family.

This Escherichia coli O6:H1 (strain CFT073 / ATCC 700928 / UPEC) protein is UPF0304 protein YfbU (yfbU).